Here is a 273-residue protein sequence, read N- to C-terminus: Putative phosphoenolpyruvate synthase regulatory protein (273 aa).

Position 153 to 160 (153 to 160 (GVSRCGKT)) interacts with ADP.

Belongs to the pyruvate, phosphate/water dikinase regulatory protein family. PSRP subfamily.

It carries out the reaction [pyruvate, water dikinase] + ADP = [pyruvate, water dikinase]-phosphate + AMP + H(+). The enzyme catalyses [pyruvate, water dikinase]-phosphate + phosphate + H(+) = [pyruvate, water dikinase] + diphosphate. Bifunctional serine/threonine kinase and phosphorylase involved in the regulation of the phosphoenolpyruvate synthase (PEPS) by catalyzing its phosphorylation/dephosphorylation. The protein is Putative phosphoenolpyruvate synthase regulatory protein of Yersinia pseudotuberculosis serotype I (strain IP32953).